A 194-amino-acid chain; its full sequence is Imidazoleglycerol-phosphate dehydratase (194 aa).

Belongs to the imidazoleglycerol-phosphate dehydratase family.

The protein localises to the cytoplasm. The enzyme catalyses D-erythro-1-(imidazol-4-yl)glycerol 3-phosphate = 3-(imidazol-4-yl)-2-oxopropyl phosphate + H2O. The protein operates within amino-acid biosynthesis; L-histidine biosynthesis; L-histidine from 5-phospho-alpha-D-ribose 1-diphosphate: step 6/9. The protein is Imidazoleglycerol-phosphate dehydratase of Bacillus cereus (strain G9842).